The primary structure comprises 444 residues: N-succinylarginine dihydrolase (444 aa).

Residues 19–28, N110, and 137–138 each bind substrate; these read AGLSFGNVAS and HR. E174 is an active-site residue. R214 lines the substrate pocket. H250 is a catalytic residue. Substrate-binding residues include D252 and N362. The Nucleophile role is filled by C368.

This sequence belongs to the succinylarginine dihydrolase family. As to quaternary structure, homodimer.

It carries out the reaction N(2)-succinyl-L-arginine + 2 H2O + 2 H(+) = N(2)-succinyl-L-ornithine + 2 NH4(+) + CO2. Its pathway is amino-acid degradation; L-arginine degradation via AST pathway; L-glutamate and succinate from L-arginine: step 2/5. In terms of biological role, catalyzes the hydrolysis of N(2)-succinylarginine into N(2)-succinylornithine, ammonia and CO(2). The sequence is that of N-succinylarginine dihydrolase from Shewanella baltica (strain OS155 / ATCC BAA-1091).